Reading from the N-terminus, the 747-residue chain is RNA polymerase II assembly factor rtp1 (747 aa).

HEAT repeat units lie at residues 37-75 (NYFLNLLEEISKLDTDQPLSVTSLRCLQLFVHLTFLLGV), 103-141 (QIYNILLPLLLTPSLLQGPLNLHYADLLLLHLYLLNCHE), 320-358 (DIIRICESCVPSLLHLQENTTLRSKVQDILLRIISVCGT), 381-418 (SQLAMFLPNLLEIWVQQPPDKRLELLELVQYALSNVDS), 459-485 (EENEEILLVLLNIISSVIGRNAELDLE), 486-523 (NPISSLLPALEQLSNYSNREISDLAKDVYKTLIQSKDD), and 557-594 (INPVRVLHVLINLLRDENSYVHLNVISAVVSLCDKYDD).

Belongs to the Tango6 family. In terms of assembly, interacts with RNA polymerase II subunits. Interacts with nuclear pore complex subunits.

Its subcellular location is the cytoplasm. The protein resides in the nucleus. In terms of biological role, required for the cytoplasmic assembly and the nuclear import of RNA polymerase II. This is RNA polymerase II assembly factor rtp1 from Schizosaccharomyces pombe (strain 972 / ATCC 24843) (Fission yeast).